We begin with the raw amino-acid sequence, 189 residues long: Parkinson disease protein 7 (189 aa).

The residue at position 2 (Ala-2) is an N-acetylalanine. 2 S-palmitoyl cysteine lipidation sites follow: Cys-46 and Cys-53. Tyr-67 is modified (phosphotyrosine). The Nucleophile role is filled by Cys-106. Residue Cys-106 is modified to Cysteine sulfinic acid (-SO2H); alternate. Residue Cys-106 is the site of S-palmitoyl cysteine; alternate attachment. His-126 is a catalytic residue. Lys-130 participates in a covalent cross-link: Glycyl lysine isopeptide (Lys-Gly) (interchain with G-Cter in SUMO). N6-acetyllysine is present on Lys-148. At Lys-182 the chain carries N6-succinyllysine.

It belongs to the peptidase C56 family. Homodimer. Binds EFCAB6/DJBP and PIAS2. Part of a ternary complex containing PARK7, EFCAB6/DJBP and AR. Interacts (via N-terminus) with OTUD7B. Interacts with BBS1, HIPK1, CLCF1 and MTERF. Forms a complex with PINK1 and PRKN. Interacts (via C-terminus) with NCF1; the interaction is enhanced by LPS and modulates NCF1 phosphorylation and membrane translocation. Interacts with NENF. The cofactor is Deglycase activity does not require glutathione as a cofactor, however, glycated glutathione constitutes a PARK7 substrate.. In terms of processing, sumoylated on Lys-130 by PIAS2 or PIAS4; which is enhanced after ultraviolet irradiation and essential for cell-growth promoting activity and transforming activity. Post-translationally, cys-106 is easily oxidized to sulfinic acid. Undergoes cleavage of a C-terminal peptide and subsequent activation of protease activity in response to oxidative stress. As to expression, highly expressed in pancreas, kidney, skeletal muscle, liver, testis and heart. Detected at slightly lower levels in placenta and brain (at protein level). Detected in astrocytes, Sertoli cells, spermatogonia, spermatids and spermatozoa. Expressed by pancreatic islets at higher levels than surrounding exocrine tissues.

It localises to the cell membrane. The protein localises to the cytoplasm. It is found in the nucleus. The protein resides in the membrane raft. Its subcellular location is the mitochondrion. It localises to the endoplasmic reticulum. The catalysed reaction is N(omega)-(1-hydroxy-2-oxopropyl)-L-arginyl-[protein] + H2O = lactate + L-arginyl-[protein] + H(+). The enzyme catalyses N(6)-(1-hydroxy-2-oxopropyl)-L-lysyl-[protein] + H2O = lactate + L-lysyl-[protein] + H(+). It carries out the reaction S-(1-hydroxy-2-oxopropyl)-L-cysteinyl-[protein] + H2O = lactate + L-cysteinyl-[protein] + H(+). It catalyses the reaction N(omega)-(1-hydroxy-2-oxoethyl)-L-arginyl-[protein] + H2O = L-arginyl-[protein] + glycolate + H(+). The catalysed reaction is N(6)-(1-hydroxy-2-oxoethyl)-L-lysyl-[protein] + H2O = glycolate + L-lysyl-[protein] + H(+). The enzyme catalyses S-(1-hydroxy-2-oxoethyl)-L-cysteinyl-[protein] + H2O = glycolate + L-cysteinyl-[protein] + H(+). It carries out the reaction N(2)-(1-hydroxy-2-oxopropyl)-dGTP + H2O = lactate + dGTP + H(+). It catalyses the reaction N(2)-(1-hydroxy-2-oxopropyl)-GTP + H2O = lactate + GTP + H(+). The catalysed reaction is N(2)-(1-hydroxy-2-oxopropyl)-GDP + H2O = lactate + GDP + H(+). The enzyme catalyses N(2)-(1-hydroxy-2-oxopropyl)-GMP + H2O = lactate + GMP + H(+). It carries out the reaction N(2)-(1-hydroxy-2-oxoethyl)-dGTP + H2O = dGTP + glycolate + H(+). It catalyses the reaction N(2)-(1-hydroxy-2-oxoethyl)-GTP + H2O = glycolate + GTP + H(+). The catalysed reaction is N(2)-(1-hydroxy-2-oxoethyl)-GDP + H2O = glycolate + GDP + H(+). The enzyme catalyses N(2)-(1-hydroxy-2-oxoethyl)-GMP + H2O = glycolate + GMP + H(+). It carries out the reaction an N(2)-(1-hydroxy-2-oxopropyl)-guanosine in RNA + H2O = a guanosine in RNA + lactate + H(+). It catalyses the reaction an N(2)-(1-hydroxy-2-oxopropyl)-2'-deoxyguanosine in DNA + H2O = a 2'-deoxyguanosine in DNA + lactate + H(+). The catalysed reaction is an N(2)-(1-hydroxy-2-oxoethyl)-guanosine in RNA + H2O = a guanosine in RNA + glycolate + H(+). The enzyme catalyses an N(2)-(1-hydroxy-2-oxoethyl)-2'-deoxyguanosine in DNA + H2O = a 2'-deoxyguanosine in DNA + glycolate + H(+). In terms of biological role, multifunctional protein with controversial molecular function which plays an important role in cell protection against oxidative stress and cell death acting as oxidative stress sensor and redox-sensitive chaperone and protease. It is involved in neuroprotective mechanisms like the stabilization of NFE2L2 and PINK1 proteins, male fertility as a positive regulator of androgen signaling pathway as well as cell growth and transformation through, for instance, the modulation of NF-kappa-B signaling pathway. Has been described as a protein and nucleotide deglycase that catalyzes the deglycation of the Maillard adducts formed between amino groups of proteins or nucleotides and reactive carbonyl groups of glyoxals. But this function is rebuted by other works. As a protein deglycase, repairs methylglyoxal- and glyoxal-glycated proteins, and releases repaired proteins and lactate or glycolate, respectively. Deglycates cysteine, arginine and lysine residues in proteins, and thus reactivates these proteins by reversing glycation by glyoxals. Acts on early glycation intermediates (hemithioacetals and aminocarbinols), preventing the formation of advanced glycation endproducts (AGE) that cause irreversible damage. Also functions as a nucleotide deglycase able to repair glycated guanine in the free nucleotide pool (GTP, GDP, GMP, dGTP) and in DNA and RNA. Is thus involved in a major nucleotide repair system named guanine glycation repair (GG repair), dedicated to reversing methylglyoxal and glyoxal damage via nucleotide sanitization and direct nucleic acid repair. Protects histones from adduction by methylglyoxal, controls the levels of methylglyoxal-derived argininine modifications on chromatin. Able to remove the glycations and restore histone 3, histone glycation disrupts both local and global chromatin architecture by altering histone-DNA interactions as well as histone acetylation and ubiquitination levels. Displays a very low glyoxalase activity that may reflect its deglycase activity. Eliminates hydrogen peroxide and protects cells against hydrogen peroxide-induced cell death. Required for correct mitochondrial morphology and function as well as for autophagy of dysfunctional mitochondria. Plays a role in regulating expression or stability of the mitochondrial uncoupling proteins SLC25A14 and SLC25A27 in dopaminergic neurons of the substantia nigra pars compacta and attenuates the oxidative stress induced by calcium entry into the neurons via L-type channels during pacemaking. Regulates astrocyte inflammatory responses, may modulate lipid rafts-dependent endocytosis in astrocytes and neuronal cells. In pancreatic islets, involved in the maintenance of mitochondrial reactive oxygen species (ROS) levels and glucose homeostasis in an age- and diet dependent manner. Protects pancreatic beta cells from cell death induced by inflammatory and cytotoxic setting. Binds to a number of mRNAs containing multiple copies of GG or CC motifs and partially inhibits their translation but dissociates following oxidative stress. Metal-binding protein able to bind copper as well as toxic mercury ions, enhances the cell protection mechanism against induced metal toxicity. In macrophages, interacts with the NADPH oxidase subunit NCF1 to direct NADPH oxidase-dependent ROS production, and protects against sepsis. The sequence is that of Parkinson disease protein 7 from Homo sapiens (Human).